The primary structure comprises 173 residues: Translocon-associated protein subunit delta (173 aa).

The signal sequence occupies residues 1-23 (MAAMASLGALALLLLSSLSRCSA). Residues 24 to 144 (EACLEPQITP…SVDHRGTWNG (121 aa)) lie on the Lumenal side of the membrane. Cys26 and Cys57 form a disulfide bridge. Residue Lys73 forms a Glycyl lysine isopeptide (Lys-Gly) (interchain with G-Cter in ubiquitin) linkage. Residues 145–165 (PWVSTEVLAAAIGLVIYYLAF) traverse the membrane as a helical segment. Residues 166–173 (SAKSHIQA) are Cytoplasmic-facing.

The protein belongs to the TRAP-delta family. As to quaternary structure, heterotetramer of TRAP-alpha, TRAP-beta, TRAP-delta and TRAP-gamma.

Its subcellular location is the endoplasmic reticulum membrane. Functionally, TRAP proteins are part of a complex whose function is to bind calcium to the ER membrane and thereby regulate the retention of ER resident proteins. The chain is Translocon-associated protein subunit delta (SSR4) from Homo sapiens (Human).